The primary structure comprises 489 residues: Endoglucanase 4 (489 aa).

The signal sequence occupies residues 1–25; it reads MAGKSFMTPAIMLAMLLLISPETYA. D81 (nucleophile) is an active-site residue. The active site involves H409. The N-linked (GlcNAc...) asparagine glycan is linked to N453. Active-site residues include D460 and E469.

It belongs to the glycosyl hydrolase 9 (cellulase E) family.

It is found in the secreted. The catalysed reaction is Endohydrolysis of (1-&gt;4)-beta-D-glucosidic linkages in cellulose, lichenin and cereal beta-D-glucans.. The chain is Endoglucanase 4 from Arabidopsis thaliana (Mouse-ear cress).